A 118-amino-acid polypeptide reads, in one-letter code: Large ribosomal subunit protein bL20 (118 aa).

It belongs to the bacterial ribosomal protein bL20 family.

In terms of biological role, binds directly to 23S ribosomal RNA and is necessary for the in vitro assembly process of the 50S ribosomal subunit. It is not involved in the protein synthesizing functions of that subunit. The protein is Large ribosomal subunit protein bL20 of Pseudomonas fluorescens (strain ATCC BAA-477 / NRRL B-23932 / Pf-5).